The chain runs to 194 residues: WASH complex subunit 3 (194 aa).

Residue methionine 1 is modified to N-acetylmethionine. The stretch at 46-74 forms a coiled coil; the sequence is AVCEEKLADLSLRIQQIETTLNILDAKLS. 2 disordered regions span residues 94 to 126 and 158 to 194; these read VTNG…PSEN and SEGL…SFSD. Low complexity predominate over residues 98-113; that stretch reads SHSETTSEQTQQNSTQ. The span at 114-126 shows a compositional bias: polar residues; it reads DSGAQESEAPSEN.

This sequence belongs to the CCDC53 family. Component of the WASH core complex also described as WASH regulatory complex (SHRC) composed of WASHC1, WASHC2, WASHC3, WASHC4 and WASHC5. The WASH core complex associates via WASHC2 with the F-actin-capping protein dimer (formed by CAPZA1, CAPZA2 or CAPZA3 and CAPZB) in a transient or substoichiometric manner which was initially described as WASH complex.

The protein resides in the early endosome. Functionally, acts as a component of the WASH core complex that functions as a nucleation-promoting factor (NPF) at the surface of endosomes, where it recruits and activates the Arp2/3 complex to induce actin polymerization, playing a key role in the fission of tubules that serve as transport intermediates during endosome sortingg. This is WASH complex subunit 3 from Mus musculus (Mouse).